Here is a 475-residue protein sequence, read N- to C-terminus: Protein translocase subunit SecD (475 aa).

Helical transmembrane passes span 7–27 (LLIT…SLKF), 313–333 (KGFM…FIYY), 338–358 (LIAD…MAYL), 364–384 (LPGV…NVLI), 410–430 (FWTI…LFQF), and 437–457 (GFAV…VTVT).

This sequence belongs to the SecD/SecF family. SecD subfamily. In terms of assembly, forms a complex with SecF. Part of the essential Sec protein translocation apparatus which comprises SecA, SecYEG and auxiliary proteins SecDF. Other proteins may also be involved.

The protein localises to the cell inner membrane. Its function is as follows. Part of the Sec protein translocase complex. Interacts with the SecYEG preprotein conducting channel. SecDF uses the proton motive force (PMF) to complete protein translocation after the ATP-dependent function of SecA. The chain is Protein translocase subunit SecD from Endomicrobium trichonymphae.